The following is a 559-amino-acid chain: Dihydroxy-acid dehydratase (559 aa).

C52 serves as a coordination point for [2Fe-2S] cluster. Residue D84 participates in Mg(2+) binding. Residue C125 coordinates [2Fe-2S] cluster. Mg(2+) contacts are provided by D126 and K127. Residue K127 is modified to N6-carboxylysine. [2Fe-2S] cluster is bound at residue C197. Residue E447 participates in Mg(2+) binding. S473 functions as the Proton acceptor in the catalytic mechanism.

This sequence belongs to the IlvD/Edd family. Homodimer. [2Fe-2S] cluster is required as a cofactor. The cofactor is Mg(2+).

It carries out the reaction (2R)-2,3-dihydroxy-3-methylbutanoate = 3-methyl-2-oxobutanoate + H2O. The catalysed reaction is (2R,3R)-2,3-dihydroxy-3-methylpentanoate = (S)-3-methyl-2-oxopentanoate + H2O. The protein operates within amino-acid biosynthesis; L-isoleucine biosynthesis; L-isoleucine from 2-oxobutanoate: step 3/4. It functions in the pathway amino-acid biosynthesis; L-valine biosynthesis; L-valine from pyruvate: step 3/4. In terms of biological role, functions in the biosynthesis of branched-chain amino acids. Catalyzes the dehydration of (2R,3R)-2,3-dihydroxy-3-methylpentanoate (2,3-dihydroxy-3-methylvalerate) into 2-oxo-3-methylpentanoate (2-oxo-3-methylvalerate) and of (2R)-2,3-dihydroxy-3-methylbutanoate (2,3-dihydroxyisovalerate) into 2-oxo-3-methylbutanoate (2-oxoisovalerate), the penultimate precursor to L-isoleucine and L-valine, respectively. The chain is Dihydroxy-acid dehydratase from Roseiflexus sp. (strain RS-1).